We begin with the raw amino-acid sequence, 118 residues long: Fluoride-specific ion channel FluC 2 (118 aa).

4 helical membrane-spanning segments follow: residues 1–21, 33–53, 55–75, and 93–113; these read MIEA…RFAI, FPIA…YIIG, GVTT…FTTF, and TFLL…FLGM. Na(+)-binding residues include Gly70 and Thr73.

Belongs to the fluoride channel Fluc/FEX (TC 1.A.43) family.

The protein localises to the cell membrane. It catalyses the reaction fluoride(in) = fluoride(out). Na(+) is not transported, but it plays an essential structural role and its presence is essential for fluoride channel function. Fluoride-specific ion channel. Important for reducing fluoride concentration in the cell, thus reducing its toxicity. The sequence is that of Fluoride-specific ion channel FluC 2 from Bacillus cereus (strain ZK / E33L).